The sequence spans 253 residues: Triosephosphate isomerase (253 aa).

Asparagine 8–lysine 10 lines the substrate pocket. Histidine 93 acts as the Electrophile in catalysis. The Proton acceptor role is filled by glutamate 165. Substrate-binding positions include glycine 171, serine 210, and glycine 231–glycine 232.

Belongs to the triosephosphate isomerase family. Homodimer.

It localises to the cytoplasm. The catalysed reaction is D-glyceraldehyde 3-phosphate = dihydroxyacetone phosphate. Its pathway is carbohydrate biosynthesis; gluconeogenesis. It functions in the pathway carbohydrate degradation; glycolysis; D-glyceraldehyde 3-phosphate from glycerone phosphate: step 1/1. Involved in the gluconeogenesis. Catalyzes stereospecifically the conversion of dihydroxyacetone phosphate (DHAP) to D-glyceraldehyde-3-phosphate (G3P). This is Triosephosphate isomerase from Francisella philomiragia subsp. philomiragia (strain ATCC 25017 / CCUG 19701 / FSC 153 / O#319-036).